An 855-amino-acid chain; its full sequence is DNA mismatch repair protein MutS (855 aa).

Position 618-625 (Gly618–Ser625) interacts with ATP.

Belongs to the DNA mismatch repair MutS family.

This protein is involved in the repair of mismatches in DNA. It is possible that it carries out the mismatch recognition step. This protein has a weak ATPase activity. This is DNA mismatch repair protein MutS from Shewanella loihica (strain ATCC BAA-1088 / PV-4).